The following is a 437-amino-acid chain: Aspartic proteinase nepenthesin-1 (437 aa).

Residues 1 to 24 (MASSLYSFLLALSIVYIFVAPTHS) form the signal peptide. A propeptide spans 25–78 (TSRTALNHRHEAKVTGFQIMLEHVDSGKNLTKFQLLERAIERGSRRLQRLEAML) (activation peptide). Asn53 and Asn98 each carry an N-linked (GlcNAc...) asparagine glycan. Residues 95 to 430 (YLMNLSIGTP…DTGNSVVSFA (336 aa)) enclose the Peptidase A1 domain. Asp113 is an active-site residue. Disulfide bonds link Cys123-Cys126, Cys129-Cys203, Cys150-Cys168, Cys155-Cys163, Cys240-Cys434, and Cys354-Cys395. N-linked (GlcNAc...) asparagine glycosylation occurs at Asn131. Residues Asn198, Asn267, and Asn307 are each glycosylated (N-linked (GlcNAc...) asparagine). Residue Asp315 is part of the active site. Asn345 is a glycosylation site (N-linked (GlcNAc...) asparagine).

It belongs to the peptidase A1 family.

It localises to the secreted. The catalysed reaction is Similar to pepsin, but also cleaves on either side of Asp and at Lys-|-Arg.. With respect to regulation, inhibited by pepstatin and by diazoacetyl-D,L-norleucine methyl ester (DAN) in the presence of Cu(2+) ions. Extracellular proteinase found in the pitcher fluid of carnivorous plants. Digest prey for nitrogen uptake. This is Aspartic proteinase nepenthesin-1 (nep1) from Nepenthes gracilis (Slender pitcher plant).